The primary structure comprises 205 residues: MSKRASSKYKIDRRMGENIWGRPKSPVNRREYGPGQHGQRRKGKLSDFGVQLRAKQKLKGYYGDLREKQFRATYDEANRRKGDTSENLIGLLESRLDAIVYRAKFVPTVFAARQFVNHGHVSVNGVKVNIGSYRCKAGDVIEVRQKSKQLAIVLEATQLAERDVPDYIEVDHNKMVATFVRVPTLSDVPYAVIMEPQLVVEFYSR.

The interval Met1–Ser46 is disordered. The S4 RNA-binding domain maps to Ser94–Leu154.

The protein belongs to the universal ribosomal protein uS4 family. Part of the 30S ribosomal subunit. Contacts protein S5. The interaction surface between S4 and S5 is involved in control of translational fidelity.

Functionally, one of the primary rRNA binding proteins, it binds directly to 16S rRNA where it nucleates assembly of the body of the 30S subunit. With S5 and S12 plays an important role in translational accuracy. In Allorhizobium ampelinum (strain ATCC BAA-846 / DSM 112012 / S4) (Agrobacterium vitis (strain S4)), this protein is Small ribosomal subunit protein uS4.